The following is a 41-amino-acid chain: Augerpeptide-s11a (41 aa).

In terms of processing, contains 4 disulfide bonds. Expressed by the venom duct.

Its subcellular location is the secreted. In terms of biological role, does not elicit any observable symptomatology in C.elegans. The chain is Augerpeptide-s11a from Terebra subulata (Chocolate spotted auger).